We begin with the raw amino-acid sequence, 296 residues long: GTPase Era (296 aa).

Residues 3 to 170 enclose the Era-type G domain; it reads KSGFVTIIGR…IELMVKHLNE (168 aa). Positions 11 to 18 are G1; that stretch reads GRPNVGKS. Position 11–18 (11–18) interacts with GTP; the sequence is GRPNVGKS. The tract at residues 37–41 is G2; it reads QTTRN. Residues 58–61 form a G3 region; the sequence is DTPG. Residues 58 to 62 and 120 to 123 contribute to the GTP site; these read DTPGM and NKID. Residues 120 to 123 are G4; it reads NKID. The segment at 149 to 151 is G5; that stretch reads ISA. The region spanning 201–277 is the KH type-2 domain; that stretch reads LSQEVPHGIA…NMKIWVKVKK (77 aa).

This sequence belongs to the TRAFAC class TrmE-Era-EngA-EngB-Septin-like GTPase superfamily. Era GTPase family. Monomer.

It localises to the cytoplasm. The protein resides in the cell membrane. Functionally, an essential GTPase that binds both GDP and GTP, with rapid nucleotide exchange. Plays a role in 16S rRNA processing and 30S ribosomal subunit biogenesis and possibly also in cell cycle regulation and energy metabolism. The chain is GTPase Era from Clostridium acetobutylicum (strain ATCC 824 / DSM 792 / JCM 1419 / IAM 19013 / LMG 5710 / NBRC 13948 / NRRL B-527 / VKM B-1787 / 2291 / W).